Reading from the N-terminus, the 360-residue chain is RNA demethylase ALKBH5 (360 aa).

Positions 1 to 53 (MSATYTDLREKLQSLNRDSPKEVRKRKQPASDTEEEDEAGSEPEAEEEEARKV) are disordered. Basic and acidic residues predominate over residues 7 to 22 (DLREKLQSLNRDSPKE). Positions 32 to 48 (DTEEEDEAGSEPEAEEE) are enriched in acidic residues. Tyr107 is an active-site residue. The 2-oxoglutarate site is built by Asn161, Tyr163, His172, His234, and Arg245. Cys198 and Cys235 form a disulfide bridge. The interval 261 to 360 (EMKSLSSSYQ…PVRKVKMRRH (100 aa)) is disordered. Positions 264–280 (SLSSSYQPERLQGSNRQ) are enriched in polar residues. Residues 281-290 (HILKPKRSHR) show a composition bias toward basic residues. Basic and acidic residues-rich tracts occupy residues 291–312 (KADPDAAHRPRILEMDKEENRR) and 330–340 (YWRRSHDHVDT).

This sequence belongs to the alkB family. Monomer. The cofactor is Fe(2+).

Its subcellular location is the nucleus speckle. The enzyme catalyses an N(6)-methyladenosine in mRNA + 2-oxoglutarate + O2 = an adenosine in mRNA + formaldehyde + succinate + CO2. Functionally, dioxygenase that specifically demethylates N(6)-methyladenosine (m6A) RNA, the most prevalent internal modification of messenger RNA (mRNA) in higher eukaryotes. Demethylates RNA by oxidative demethylation, which requires molecular oxygen, alpha-ketoglutarate and iron. Demethylation of m6A mRNA affects mRNA processing, translation and export. The sequence is that of RNA demethylase ALKBH5 (alkbh5) from Xenopus laevis (African clawed frog).